Reading from the N-terminus, the 466-residue chain is F-box/LRR-repeat protein fbxl-1 (466 aa).

Residues 54 to 100 form the F-box domain; that stretch reads SLINRVLPKEVLLKVFSFLDTKALCRSAQVCRSWSILALDGSNWQRV. 11 LRR repeats span residues 122–147, 148–173, 174–199, 200–225, 226–251, 252–277, 278–303, 304–329, 330–355, 356–381, and 408–433; these read GGFLKELSLKGCENVHDSALRTFTSR, CPNLEHLSLYRCKRVTDASCENLGRY, CHKLNYLNLENCSSITDRAMKYIGDG, CPNLSYLNISWCDAIQDRGVQIILSN, CKSLDTLILRGCEGLTENVFGSVEAH, MGAIKKLNLLQCFQLTDITVQNIANG, ATALEYLCMSNCNQISDRSLVSLGQH, SHNLKVLELSGCTLLGDNGFIPLARG, CRQLERLDMEDCSLISDHTINSLANN, CTALRELSLSHCELITDESIQNLASK, and CKALKRIDLYDCQNVSKEAIVRFQHH.

In terms of assembly, component of the SCF (SKP1-CUL1-F-box protein)-type E3 ubiquitin ligase complex. In terms of tissue distribution, expressed in neuroglial cells such as the socket cell and sheath cell, neurosecretory motor neurons and regions around the pharynx and anus.

It localises to the perikaryon. Its subcellular location is the cell projection. It is found in the dendrite. The protein localises to the cilium. The protein resides in the axon. Functionally, substrate-recognition component of the SCF (SKP1-CUL1-F-box protein)-type E3 ubiquitin ligase complex. Plays a role in regulating the entry into the dauer state. In hermaphrodites, may play a role in modulating the rate of defecation. The sequence is that of F-box/LRR-repeat protein fbxl-1 from Caenorhabditis elegans.